Here is a 369-residue protein sequence, read N- to C-terminus: Sulfate permease 2, chloroplastic (369 aa).

Positions 1–21 (MASTTLLQPALGLPSRVGPRS) are disordered. The transit peptide at 1 to 82 (MASTTLLQPA…QQSRGDLLVS (82 aa)) directs the protein to the chloroplast. Transmembrane regions (helical) follow at residues 110 to 130 (VGVA…NVFV), 156 to 176 (TLML…VAAI), 187 to 207 (VFLM…TGLM), 229 to 249 (VVFA…PFVV), and 335 to 355 (TEAA…TLWI). Positions 153 to 356 (LKMTLMLAFV…ALALGTLWIK (204 aa)) constitute an ABC transmembrane type-1 domain.

It belongs to the ATP-binding cassette (ABC) (TC 3.A.1) superfamily. Part of the chloroplast sulfate permease holocomplex. May form a heterodimer with SLUP1.

The protein resides in the plastid. The protein localises to the chloroplast membrane. Part of the ABC-type chloroplast envelope-localized sulfate transporter. The protein is Sulfate permease 2, chloroplastic (SULP2) of Chlamydomonas reinhardtii (Chlamydomonas smithii).